The following is a 254-amino-acid chain: MEILIRSTPADVAVAAADILASYANTSATLGLATGSTPVATYKELIARHERGEVSFAGSRAFLLDEYLGLAPEHEQSYYATIRRDFTSHVDFDDALVKSPEGSAADPVAATAAYDQAIRNAGGIDVQLLGIGANGHIGFNEPSSSLTSRTRVVALHPQTVQDNSRFFDNLEEVPRHALTQGLGTISEARHLLLIATGTNKANAVQAMVEGPLSARCPGSVLQLHPRATVIVDEAAAALLEDREYYLFADQNRLH.

D65 (proton acceptor; for enolization step) is an active-site residue. N134 serves as the catalytic For ring-opening step. H136 acts as the Proton acceptor; for ring-opening step in catalysis. E141 acts as the For ring-opening step in catalysis.

The protein belongs to the glucosamine/galactosamine-6-phosphate isomerase family. NagB subfamily.

It catalyses the reaction alpha-D-glucosamine 6-phosphate + H2O = beta-D-fructose 6-phosphate + NH4(+). It participates in amino-sugar metabolism; N-acetylneuraminate degradation; D-fructose 6-phosphate from N-acetylneuraminate: step 5/5. In terms of biological role, catalyzes the reversible isomerization-deamination of glucosamine 6-phosphate (GlcN6P) to form fructose 6-phosphate (Fru6P) and ammonium ion. The chain is Glucosamine-6-phosphate deaminase from Corynebacterium aurimucosum (strain ATCC 700975 / DSM 44827 / CIP 107346 / CN-1) (Corynebacterium nigricans).